A 275-amino-acid polypeptide reads, in one-letter code: NADPH-dependent 7-cyano-7-deazaguanine reductase (275 aa).

Position 81-83 (81-83) interacts with substrate; it reads IES. Residue 83–84 coordinates NADPH; it reads SK. The Thioimide intermediate role is filled by Cys181. Asp188 functions as the Proton donor in the catalytic mechanism. Substrate is bound at residue 220 to 221; it reads HE. Residue 249–250 coordinates NADPH; the sequence is RG.

This sequence belongs to the GTP cyclohydrolase I family. QueF type 2 subfamily. In terms of assembly, homodimer.

The protein localises to the cytoplasm. The catalysed reaction is 7-aminomethyl-7-carbaguanine + 2 NADP(+) = 7-cyano-7-deazaguanine + 2 NADPH + 3 H(+). It participates in tRNA modification; tRNA-queuosine biosynthesis. Its function is as follows. Catalyzes the NADPH-dependent reduction of 7-cyano-7-deazaguanine (preQ0) to 7-aminomethyl-7-deazaguanine (preQ1). The sequence is that of NADPH-dependent 7-cyano-7-deazaguanine reductase from Xylella fastidiosa (strain M12).